Reading from the N-terminus, the 228-residue chain is Cutinase (228 aa).

A signal peptide spans 1-16; it reads MKFLSIISLAVSLVAA. An intrachain disulfide couples Cys49 to Cys129. Ser140 functions as the Nucleophile in the catalytic mechanism. Cys191 and Cys198 are oxidised to a cystine. Asp195 is an active-site residue. His208 (proton donor/acceptor) is an active-site residue.

This sequence belongs to the cutinase family. The 2 disulfide bonds play a critical role in holding the catalytic residues in juxta-position; reduction of the disulfide bridges results in the complete inactivation of the enzyme.

The protein resides in the secreted. The catalysed reaction is cutin + H2O = cutin monomers.. Partially inhibited by berberine; higher inhibitory effects are observed with longer chain polyester substrates. Catalyzes the hydrolysis of complex carboxylic polyesters found in the cell wall of plants. Degrades cutin, a macromolecule that forms the structure of the plant cuticle. Allows pathogenic fungi to penetrate through the cuticular barrier into the host plant during the initial stage of fungal infection. This chain is Cutinase (CUTA), found in Colletotrichum truncatum (Anthracnose fungus).